The chain runs to 331 residues: Lipoyl synthase (331 aa).

The tract at residues 1 to 33 (MSDALIASSSEAPQSPAEQYDPTRKQKSADKTA) is disordered. The segment covering 7–19 (ASSSEAPQSPAEQ) has biased composition (low complexity). Residues 21–33 (DPTRKQKSADKTA) show a composition bias toward basic and acidic residues. The [4Fe-4S] cluster site is built by cysteine 78, cysteine 83, cysteine 89, cysteine 104, cysteine 108, cysteine 111, and serine 318. The 219-residue stretch at 89-307 (CFGKGTATFM…EEEAYKMGFT (219 aa)) folds into the Radical SAM core domain.

It belongs to the radical SAM superfamily. Lipoyl synthase family. [4Fe-4S] cluster is required as a cofactor.

It localises to the cytoplasm. It carries out the reaction [[Fe-S] cluster scaffold protein carrying a second [4Fe-4S](2+) cluster] + N(6)-octanoyl-L-lysyl-[protein] + 2 oxidized [2Fe-2S]-[ferredoxin] + 2 S-adenosyl-L-methionine + 4 H(+) = [[Fe-S] cluster scaffold protein] + N(6)-[(R)-dihydrolipoyl]-L-lysyl-[protein] + 4 Fe(3+) + 2 hydrogen sulfide + 2 5'-deoxyadenosine + 2 L-methionine + 2 reduced [2Fe-2S]-[ferredoxin]. It functions in the pathway protein modification; protein lipoylation via endogenous pathway; protein N(6)-(lipoyl)lysine from octanoyl-[acyl-carrier-protein]: step 2/2. Its function is as follows. Catalyzes the radical-mediated insertion of two sulfur atoms into the C-6 and C-8 positions of the octanoyl moiety bound to the lipoyl domains of lipoate-dependent enzymes, thereby converting the octanoylated domains into lipoylated derivatives. The chain is Lipoyl synthase from Cupriavidus pinatubonensis (strain JMP 134 / LMG 1197) (Cupriavidus necator (strain JMP 134)).